Here is a 205-residue protein sequence, read N- to C-terminus: Ribosomal RNA small subunit methyltransferase G (205 aa).

Residues Gly76, Leu81, 127-128 (IE), and Arg140 each bind S-adenosyl-L-methionine.

Belongs to the methyltransferase superfamily. RNA methyltransferase RsmG family.

The protein localises to the cytoplasm. The enzyme catalyses guanosine(527) in 16S rRNA + S-adenosyl-L-methionine = N(7)-methylguanosine(527) in 16S rRNA + S-adenosyl-L-homocysteine. Specifically methylates the N7 position of guanine in position 527 of 16S rRNA. The chain is Ribosomal RNA small subunit methyltransferase G from Francisella tularensis subsp. holarctica (strain FTNF002-00 / FTA).